The sequence spans 92 residues: Small ribosomal subunit protein uS19c (92 aa).

It belongs to the universal ribosomal protein uS19 family.

The protein resides in the plastid. Its subcellular location is the chloroplast. In terms of biological role, protein S19 forms a complex with S13 that binds strongly to the 16S ribosomal RNA. The polypeptide is Small ribosomal subunit protein uS19c (Lobularia maritima (Sweet alyssum)).